Here is a 338-residue protein sequence, read N- to C-terminus: Probable tRNA pseudouridine synthase B (338 aa).

Residue aspartate 82 is the Nucleophile of the active site. Residues 250–325 (LPKVWIRDSA…IAVDVDKVFM (76 aa)) form the PUA domain.

It belongs to the pseudouridine synthase TruB family. Type 2 subfamily.

The catalysed reaction is uridine(55) in tRNA = pseudouridine(55) in tRNA. In terms of biological role, could be responsible for synthesis of pseudouridine from uracil-55 in the psi GC loop of transfer RNAs. This Thermococcus kodakarensis (strain ATCC BAA-918 / JCM 12380 / KOD1) (Pyrococcus kodakaraensis (strain KOD1)) protein is Probable tRNA pseudouridine synthase B.